The chain runs to 126 residues: Fluoride-specific ion channel FluC (126 aa).

The next 4 membrane-spanning stretches (helical) occupy residues 4-24, 35-55, 67-87, and 97-117; these read SLLS…FVGL, LGTI…IALF, FVIT…AEVI, and FAIA…VLGL. Na(+) is bound by residues G74 and T77.

This sequence belongs to the fluoride channel Fluc/FEX (TC 1.A.43) family.

The protein resides in the cell inner membrane. The catalysed reaction is fluoride(in) = fluoride(out). With respect to regulation, na(+) is not transported, but it plays an essential structural role and its presence is essential for fluoride channel function. Functionally, fluoride-specific ion channel. Important for reducing fluoride concentration in the cell, thus reducing its toxicity. This is Fluoride-specific ion channel FluC from Acinetobacter baylyi (strain ATCC 33305 / BD413 / ADP1).